Here is a 605-residue protein sequence, read N- to C-terminus: Pyruvate decarboxylase 2 (605 aa).

Positions 68 and 155 each coordinate substrate. The segment at 433–515 is thiamine pyrophosphate binding; it reads DSWFNCQKLK…FLINNGGYTI (83 aa). Aspartate 483, asparagine 510, and glycine 512 together coordinate Mg(2+). Glutamate 516 is a binding site for substrate.

This sequence belongs to the TPP enzyme family. Homotetramer. The cofactor is a metal cation. Requires thiamine diphosphate as cofactor.

The enzyme catalyses a 2-oxocarboxylate + H(+) = an aldehyde + CO2. The chain is Pyruvate decarboxylase 2 (PDC2) from Oryza sativa subsp. japonica (Rice).